Here is a 200-residue protein sequence, read N- to C-terminus: Large ribosomal subunit protein uL4 (200 aa).

Residues 38–72 form a disordered region; sequence GRQGSKQQKTRSDVSGGGKRPWRQKGTGRARAGTI.

The protein belongs to the universal ribosomal protein uL4 family. In terms of assembly, part of the 50S ribosomal subunit.

One of the primary rRNA binding proteins, this protein initially binds near the 5'-end of the 23S rRNA. It is important during the early stages of 50S assembly. It makes multiple contacts with different domains of the 23S rRNA in the assembled 50S subunit and ribosome. Its function is as follows. Forms part of the polypeptide exit tunnel. This chain is Large ribosomal subunit protein uL4, found in Pseudomonas fluorescens (strain ATCC BAA-477 / NRRL B-23932 / Pf-5).